The following is a 975-amino-acid chain: Aminopeptidase N (975 aa).

Residues 1–11 (MAKGFYISKAL) lie on the Cytoplasmic side of the membrane. The helical; Signal-anchor for type II membrane protein transmembrane segment at 12-32 (GILAIVLGIAAVSTIIALSVV) threads the bilayer. A cytosolic Ser/Thr-rich junction region spans residues 33 to 74 (YAQEKNKNAESSPVSSPVSSPVSSPVSPTNPSTTAATTLAQS). The Extracellular segment spans residues 33–975 (YAQEKNKNAE…VLQWFRENSQ (943 aa)). Positions 41–68 (AESSPVSSPVSSPVSSPVSPTNPSTTAA) are disordered. Residues 43–59 (SSPVSSPVSSPVSSPVS) show a composition bias toward low complexity. The segment at 75-975 (KPWNHYRLPK…VLQWFRENSQ (901 aa)) is metalloprotease. N-linked (GlcNAc...) asparagine glycosylation occurs at asparagine 134. Position 182 is a sulfotyrosine (tyrosine 182). N-linked (GlcNAc...) asparagine glycans are attached at residues asparagine 240 and asparagine 271. Substrate is bound at residue 358 to 362 (GAMEN). Histidine 394 contributes to the Zn(2+) binding site. Catalysis depends on glutamate 395, which acts as the Proton acceptor. The Zn(2+) site is built by histidine 398 and glutamate 417. Sulfotyrosine occurs at positions 425 and 430. 5 N-linked (GlcNAc...) asparagine glycosylation sites follow: asparagine 533, asparagine 580, asparagine 633, asparagine 689, and asparagine 747. Disulfide bonds link cysteine 769–cysteine 776 and cysteine 806–cysteine 842. Asparagine 826 carries N-linked (GlcNAc...) asparagine glycosylation.

This sequence belongs to the peptidase M1 family. In terms of assembly, (Microbial infection) Interacts with CCoV spike glycoprotein. As to quaternary structure, homodimer. Interacts with SLC6A19. The cofactor is Zn(2+). Sulfated. In terms of processing, N- and O-glycosylated. Post-translationally, may undergo proteolysis and give rise to a soluble form.

Its subcellular location is the cell membrane. It carries out the reaction Release of an N-terminal amino acid, Xaa-|-Yaa- from a peptide, amide or arylamide. Xaa is preferably Ala, but may be most amino acids including Pro (slow action). When a terminal hydrophobic residue is followed by a prolyl residue, the two may be released as an intact Xaa-Pro dipeptide.. In terms of biological role, broad specificity aminopeptidase which plays a role in the final digestion of peptides generated from hydrolysis of proteins by gastric and pancreatic proteases. Also involved in the processing of various peptides including peptide hormones, such as angiotensin III and IV, neuropeptides, and chemokines. May also be involved the cleavage of peptides bound to major histocompatibility complex class II molecules of antigen presenting cells. May have a role in angiogenesis and promote cholesterol crystallization. May have a role in amino acid transport by acting as binding partner of amino acid transporter SLC6A19 and regulating its activity. Its function is as follows. (Microbial infection) Probable receptor for canine coronavirus (CCoV). This chain is Aminopeptidase N (ANPEP), found in Canis lupus familiaris (Dog).